Consider the following 518-residue polypeptide: 2-isopropylmalate synthase (518 aa).

The region spanning 4-266 (INVFDTTLRD…DSSLNLHELK (263 aa)) is the Pyruvate carboxyltransferase domain. Mn(2+) contacts are provided by aspartate 13, histidine 201, histidine 203, and asparagine 237. Positions 391 to 518 (EFLSLQVHYG…GLKRQTAVGS (128 aa)) are regulatory domain.

This sequence belongs to the alpha-IPM synthase/homocitrate synthase family. LeuA type 1 subfamily. As to quaternary structure, homodimer. Requires Mn(2+) as cofactor.

The protein resides in the cytoplasm. It catalyses the reaction 3-methyl-2-oxobutanoate + acetyl-CoA + H2O = (2S)-2-isopropylmalate + CoA + H(+). The protein operates within amino-acid biosynthesis; L-leucine biosynthesis; L-leucine from 3-methyl-2-oxobutanoate: step 1/4. Functionally, catalyzes the condensation of the acetyl group of acetyl-CoA with 3-methyl-2-oxobutanoate (2-ketoisovalerate) to form 3-carboxy-3-hydroxy-4-methylpentanoate (2-isopropylmalate). The protein is 2-isopropylmalate synthase of Bacillus velezensis (strain DSM 23117 / BGSC 10A6 / LMG 26770 / FZB42) (Bacillus amyloliquefaciens subsp. plantarum).